A 237-amino-acid polypeptide reads, in one-letter code: Segregation and condensation protein A (237 aa).

The protein belongs to the ScpA family. In terms of assembly, component of a cohesin-like complex composed of ScpA, ScpB and the Smc homodimer, in which ScpA and ScpB bind to the head domain of Smc. The presence of the three proteins is required for the association of the complex with DNA.

The protein localises to the cytoplasm. Functionally, participates in chromosomal partition during cell division. May act via the formation of a condensin-like complex containing Smc and ScpB that pull DNA away from mid-cell into both cell halves. This chain is Segregation and condensation protein A, found in Streptococcus thermophilus (strain ATCC BAA-250 / LMG 18311).